Consider the following 407-residue polypeptide: Extracellular superoxide dismutase [Cu-Zn] 3 (407 aa).

The N-terminal stretch at 1 to 19 is a signal peptide; the sequence is MRLLSVLVFLISVISIAKA. Residues 20–386 lie on the Extracellular side of the membrane; it reads DYQYAFCKFN…SESYNDNEPG (367 aa). Residues N51, N205, and N224 are each glycosylated (N-linked (GlcNAc...) asparagine). Cu cation-binding residues include H245 and H247. N-linked (GlcNAc...) asparagine glycosylation occurs at N256. H263 is a binding site for Cu cation. 4 residues coordinate Zn(2+): H263, H271, H280, and D283. H320 contributes to the Cu cation binding site. 2 N-linked (GlcNAc...) asparagine glycosylation sites follow: N321 and N364. Residues 387–406 form a helical membrane-spanning segment; it reads SSSTVIPFFALIIFSIIFAL. Position 407 (L407) is a topological domain, cytoplasmic.

It belongs to the Cu-Zn superoxide dismutase family. Requires Cu cation as cofactor. The cofactor is Zn(2+).

The protein resides in the cell membrane. The catalysed reaction is 2 superoxide + 2 H(+) = H2O2 + O2. Its function is as follows. Protect the extracellular space from toxic effect of reactive oxygen intermediates by converting superoxyde radicals into hydrogen peroxyde and oxygen. The chain is Extracellular superoxide dismutase [Cu-Zn] 3 (sodC) from Dictyostelium discoideum (Social amoeba).